We begin with the raw amino-acid sequence, 475 residues long: Putative amidase AmiD (475 aa).

Residues K93 and S166 each act as charge relay system in the active site. Residue S190 is the Acyl-ester intermediate of the active site.

The protein belongs to the amidase family.

The enzyme catalyses a monocarboxylic acid amide + H2O = a monocarboxylate + NH4(+). This chain is Putative amidase AmiD (amiD), found in Mycobacterium bovis (strain ATCC BAA-935 / AF2122/97).